A 3994-amino-acid chain; its full sequence is MSPSIPEPIAIVGSSCRFPGSSSSPSKLWDLLREPRDVRRNLSQNLNLQRFYHPSGENHGSTDVKGLGYLLAEDSRLFDPAVFGISPYEAETIDPQQRILLEIVYESMENAGYTLAQMRGSQTSVHVGVMTDDYHDIQLRDVESLPQYTSTGTARSMMANRISYVFDLHGPSVTIDTACSSSLVALHQAVQSLQLGEATCAVVGGVNLIFDPAMYVAESNLHMLSPDSQSRMWDKTANGYARGEGAAAVLLKPLSQALRDNDHIEGLIRGSGVNSDGQSPGITMPTATAQAALIRATYKRAGLDPIKDRCQYFECHGTGTAAGDPVEAQAISEALFEEATFTNEATDTPPLYVGSIKTVTGHLEGCAGLAGLLKALVSIKNRIIPPNMLFNELNPKIEPYYGRMQITTVPIPWPNVGTGAPLRVSINSFGFGGTNSHVILESYESSGQRNLELASKKNALLGPIVLSAHSGASLLGNAKNMLQYLKDNPSVNLSDLSYVLQTRRTAHRARAFFSSSSHQGLINKLQDFVGDNEKISKKSTIGIRHKPVNSSETPGILGVFTGQGAQWPRMGRMLLDHCPLFRDVLERCDATLQALPDHPEWLLVDELCKHAEVSRVGEAAISQPLCTAIQLGLLEVLFSSGIHFDAVVGHSSGEIAAVYACGIISLSAAMQIAFYRGRYASLAQGANGEVGAMMAVGISHREAQKFCQKSEYQGHISVAASNGVQSVTLSGDSEFIQQAKEHFESENVFARLLKVDTAYHSQHMKRCAGPYLQSLEACNIQVRQPREGCFWNSSVRGDTELLRGDLRSLKGPYWVQNMVQTVLFSQAVRSSIWHGGPYDVVIEVGPHPALKGPTEQTLQSAFGATPTYTGVLKRDSNDVEALFDAIGVVWAHLGPQFVNFEGLWRTLVPDSTQLSPRLLKDLPKYSWDHERVYWRESRISARFRRGNDVFHELLGRRTHDDTDRELRWRNILKLSELPWVQGHTIMGEALLPGASYVALAFQAGHAIAAGRRVQLMEVQDVEIRRPIVVPDSREGQDTIFTVHLLDARDPNMIEGHFSYCYCSDTSTGAMVRTCEGRLIIHLGETTGDELPPYTPPPPNLLSVDTDEGYEVLAQAGLLYSGIFRRLQDVERRLDFAEAKAQWATEELRGEYVVHPALLDVSFQSIFHARADPSTGKLPVSVLPVHIKRVVVNPKATLGAQMGTIRTMTQSFVTARDGLSLSGDIHVFDAMTGEAALQVEALSVKPMAPPTAEQDTRLFFDTVFMADPSLNLLEPQRNPVDDTRDMALVSDIDRVVLYYVQRVLEQLDPEEVAGFSWYFKRMLDAYEYWVQLVRADRHPVAPSSWLADEFEVIDEIYTRWPGQIELEIARAIGENIVDVMHGKMQMLEVLMENDRLGRMYYEGCGFTIVNAGLRNVMEQISNKYPQAKYLEIGAGTGSASHAILSSIGTTFDNYTYTDISTGFFENAAKRFAQFSHKMLFKTLDVEKDVVAQGYDMHSYDVVVASNVLHATGNLQLTLENVRSLLKPGGFLLLIEITGIEIMRVGYIMGGLPGWWLGAKEGRRFHPGLTTEDWDRTLQDTGYSGVDLAFHDLPDSDRHCMSLLVSQAVDETVLQLREPLGYIEDVPKTDNLLLIGGRTLPISKLTSTVQRLAGSSWRSRVVVARDIEAVDFSLLSSSVDVVCLQELDAPLFSNFITTKRLEALQAIILHSRNVLWVTKSRRAENPYQNMFLGMARAIWKEMAHVTIQSLDVETITNPNNVARTILETFLRMKILSGVDNQSTLLWTREQELIIEGGETLIARLRPNQELNDRYNARYRTVTKSVNGSHAAIRLIQQGDKMAFTETDDHHPADTIEHVTVKTSFSLTVPGDSSQGSTYLVVGREIDVGTPLLAVSHIDASVLRVPQTDTIPIDEASCNELFLERFLNNIFSDTLLNLIAAGGSVTLYQPRNGLAAVIAATAEDRGIEVFFVCSTSGDVAVPENWIWMHPHSSPRIIRSLLPRNDSIFVNCSGLSNYLTSAIHSVLPSHLPVLELESWVFQTGLSVLRGCGSLAAGYDSLLSRLPRLNAALPLSGDLPLFNMDQIAGAKASTQEITHITSWEKAKDFLTLVVQPPDPTTMFDARKTYLMVGMAGGLGLSICEWALRHGAKQMVITSRNPEIHSQWLADARHKGTIVHVKSMDVTDRASVDTTVRWIQDTLPPIAGVCNAAMVLTDRMFANMDADAINRTLNPKVNGSKYLDEVFANTPLDFFILLSSCGAIMGSKGQSNYHAANMYMSALATQRRERGFAASIIHIGFVTDVGYTTRNKGTLKDVWAQFEFRFLSEMDVHHAFAEAIVSGRPNSHRSCEVGVGINPLTEPFTADRKPAWASDPRFSHYLPSTNLQNEVVARSRQEDLKERLMDVSTEDEAVEITQKAFSSKLETMMQLPVGSLSVQASLIELGIDSLVAVDIRNWFLRELGADIPVLKILGGDSVAQICTNAAKQLLAQKGGQEPSEQEEVEPESTTLHVSQGSLHTPSEGLEFTETSSVGGTENTPLTSASSSPSVTDTVEKRDKGDISVDEGPNEQFDPDDRDYNPDIIETERLSSGQSRIYILSRFLNNPTDYNLVFQFEIDGCLDMELLRDAFTVTTQHHESLRTCYFVRQEDNQPMQGVLASPVVRFQHVPDATADEIAAEVALGKSRVWDLERGETMAMTVFSLSPQSHTMVFSYHHIIMDSTGWRVFFQDLALAYHMEPLQHASKTYVEYTRKQIAQQQTGHFQSQLQYWKQEYSSFPPVLPLLPMSRVKTRPNAQSSGITYSRLEIGYEVAQAMKASCQKLRITAFHFHLAVFQVMLSQLAGIDDICIGVADANRLDGEFAETVGFFMNMLPVRFHVSPNAKFSQIAQGTARKVLGAVQNSAVPFDMILDDLHVARSSSHTPLFQAAINYQLRVAKKLPFAGSSLTLFDAQDAKNPYDLSLGIIEYHSEGFILDMSCQESLYDAAATRTILETYVQILEGVVSNTYMTVAKIPIHAPIAVIDAVRLGQGPQVDFSWPATLSQQFQAIHETNREDLAICDGDQSLTYDQLTDRVNSIASALKTVGHTTSLRVAVLCRPSVDFTASMLAILHIGALYIPLDISLPPARHAAIIDSARPSVVICHDATIELASQLGAGSEGNRMPIIRVDDVEVAKERVPCNARPEAPAVLLYTSGSVGKPKGVVLTQANFVNHIALKIHELNLRLGCEKILQQSSLGFDMSIIQIFCALCTGGTLFIVPYESRRDALHITQLMSKHRITITIATPSEYLTWLHYGWDSLVQCFDWRWACMGGEVVQPPLMREFQRLGLASLSCLNCYGPTEITAAATFHRISLKEDVLKLESTVGKAIPNYTLRIVDFSGRTQPVGFRGEICIGGAGLALGYWESLEETARAFFVDGSSTRWYRTGDQGRLTADGSLVFLGRLEGSTQVKVRGLRIELEEVEKALLEVGASLFSTVVVTVRDDALMAYATPLVNQGDDIEPAIITELLAGLPLPQYMCPSQVIIVDDLPCNSNGKIDRNALATLPFSAPSQGLFNPQTAPKLSLRQSELRILWEKVLPPTSHPLMAESDFFLEGGNSLRLLKLQHAIKESMGTSITTRELYEASTLQKMTMLVDLERDRQTVKSKLIDWEAETAIPESLITIAQDAIGAVKRSPVDDDEVVEVLMTGATGFLGGSILKELLQNVHIRRVHCVAILPDEQGHLPSDSKVVHYTGSLSSPTLGLSPSECLALQESIDVVIHAGANGHCLNNYTSVREANVHPTQFLASLCVPHSIPLLYISSPRVPLLTGNTAPLPGPVPTQPPTTGAEGYTASKWASEQFLQRMSNHASMRIEIHRPCVVIGDQAPASDALNAILRYSLKMKCLPKFSRVEGFFDFKKVEEVAQDLVSSTVALGLGRGRSQTGREAKVHFQHHSSGKKVAFSAMAKHMKEMYGEEFSEMEILDWLERALKEGMDPLISSYLESLVENGDTLQFPYLGEVHSS.

Residues 6–442 (PEPIAIVGSS…GTNSHVILES (437 aa)) form the Ketosynthase family 3 (KS3) domain. Residues cysteine 179, histidine 316, and histidine 362 each act as for beta-ketoacyl synthase activity in the active site. Residues 559–881 (VFTGQGAQWP…LKRDSNDVEA (323 aa)) are malonyl-CoA:ACP transacylase (MAT) domain. The N-terminal hotdog fold stretch occupies residues 951 to 1085 (HELLGRRTHD…GRLIIHLGET (135 aa)). The interval 951 to 1251 (HELLGRRTHD…SVKPMAPPTA (301 aa)) is dehydratase (DH) domain. Positions 951–1252 (HELLGRRTHD…VKPMAPPTAE (302 aa)) constitute a PKS/mFAS DH domain. The active-site Proton acceptor; for dehydratase activity is the histidine 983. The tract at residues 1100–1252 (LLSVDTDEGY…VKPMAPPTAE (153 aa)) is C-terminal hotdog fold. Residue aspartate 1159 is the Proton donor; for dehydratase activity of the active site. The interval 1292–1593 (DRVVLYYVQR…VDLAFHDLPD (302 aa)) is methyltransferase (MT) domain. Residues 2123-2297 (TYLMVGMAGG…ASIIHIGFVT (175 aa)) are ketoreductase (KR) domain. The Carrier 1 domain occupies 2406-2483 (EAVEITQKAF…QICTNAAKQL (78 aa)). Serine 2443 bears the O-(pantetheine 4'-phosphoryl)serine mark. Positions 2486–2575 (QKGGQEPSEQ…FDPDDRDYNP (90 aa)) are disordered. Composition is skewed to polar residues over residues 2505 to 2514 (LHVSQGSLHT) and 2522 to 2546 (TETSSVGGTENTPLTSASSSPSVTD). The span at 2547 to 2556 (TVEKRDKGDI) shows a compositional bias: basic and acidic residues. The span at 2557-2570 (SVDEGPNEQFDPDD) shows a compositional bias: acidic residues. The tract at residues 2582–3007 (RLSSGQSRIY…SNTYMTVAKI (426 aa)) is condensation (C) domain. Residues 3043 to 3436 (HETNREDLAI…DGSLVFLGRL (394 aa)) are adenylation (A) (KR) domain. Residues 3553 to 3630 (PKLSLRQSEL…KMTMLVDLER (78 aa)) enclose the Carrier 2 domain. Serine 3590 carries the O-(pantetheine 4'-phosphoryl)serine modification. Residues 3679–3895 (TGATGFLGGS…FDFKKVEEVA (217 aa)) form a reductase (RED) domain region.

The protein in the C-terminal section; belongs to the NRP synthetase family. It depends on pantetheine 4'-phosphate as a cofactor.

It participates in secondary metabolite biosynthesis. In terms of biological role, hybrid PKS-NRPS synthetase; part of the gene cluster that mediates the biosynthesis of oxopyrrolidines, polyketide-amino acid hybrid compounds with feature structures of tetramic acid. The polyketide chain is first assembled by the highly reducing PKS module of opdA using acetyl-CoA as the starter unit and five malonyl-CoA as the extender units. OpdC acts as trans-acting enoyl reductase and reduces the terminal alkenyl to alkane. The 17R in oxopyrrolidine A and 15R, 17S in oxopyrrolidine B are generated by non-stereospecific catalysis of the ketoreductase (KR) domain and enoyl reductases. Then the polyketides with specific configurations are transferred to the NRPS module of opdA and linked to L-tyrosine to form an amide bond. Finally, the oxopyrrolidines are offloaded through a Dieckmann cyclization catalyzed by the terminal D domain to give a tetramic acid moiety. This chain is Hybrid PKS-NRPs synthetase opdA, found in Penicillium oxalicum (strain 114-2 / CGMCC 5302) (Penicillium decumbens).